The chain runs to 153 residues: MAKFLSQDQINEYKECFSLYDKQQRGKIKATDLLVSMRCLGASPTPGEVQRHLQTHGIDKNGELDFSTFLTIMHMQIKQEDPKKEILLAMLMADKEKKGYIMASELRSKLMKLGEKLTHKEVDDLFKEAGIEPNGQVKYDTFIQRITIPVRDY.

4 EF-hand domains span residues 8-43 (DQIN…LGAS), 44-79 (PTPG…QIKQ), 81-116 (DPKK…LGEK), and 117-152 (LTHK…PVRD).

Belongs to the calmodulin family. Interacts with MYO7B; the interaction mediates the association of CALML4 with the IMAC/intermicrovillar adhesion complex. Interacts with MYO7A. Expressed in the small intestine, in both mature enterocytes on the villus surface and immature cells that reside in the crypt stem-cell niche.

The protein localises to the cell projection. The protein resides in the microvillus. Functionally, as part of the intermicrovillar adhesion complex/IMAC plays a role in epithelial brush border differentiation, controlling microvilli organization and length. Acts as a light chain for MYO7B and is required for efficient targeting of the IMAC to the tips of border brush microvilli. In Mus musculus (Mouse), this protein is Calmodulin-like protein 4 (Calml4).